We begin with the raw amino-acid sequence, 458 residues long: Argininosuccinate lyase (458 aa).

It belongs to the lyase 1 family. Argininosuccinate lyase subfamily.

The protein localises to the cytoplasm. The enzyme catalyses 2-(N(omega)-L-arginino)succinate = fumarate + L-arginine. Its pathway is amino-acid biosynthesis; L-arginine biosynthesis; L-arginine from L-ornithine and carbamoyl phosphate: step 3/3. This is Argininosuccinate lyase from Bacillus velezensis (strain DSM 23117 / BGSC 10A6 / LMG 26770 / FZB42) (Bacillus amyloliquefaciens subsp. plantarum).